The chain runs to 316 residues: Thioredoxin reductase (316 aa).

36–43 (ERGIPGGQ) provides a ligand contact to FAD. A disulfide bridge links Cys135 with Cys138. 278–287 (DIREKSLRQI) is an FAD binding site.

Belongs to the class-II pyridine nucleotide-disulfide oxidoreductase family. Homodimer. The cofactor is FAD.

Its subcellular location is the cytoplasm. The enzyme catalyses [thioredoxin]-dithiol + NADP(+) = [thioredoxin]-disulfide + NADPH + H(+). This Bacillus subtilis (strain 168) protein is Thioredoxin reductase (trxB).